The primary structure comprises 91 residues: Large ribosomal subunit protein eL37B (91 aa).

4 residues coordinate Zn(2+): cysteine 19, cysteine 22, cysteine 34, and cysteine 37. A C4-type zinc finger spans residues 19-37 (CRRCGKRSFHIQKSTCACC).

The protein belongs to the eukaryotic ribosomal protein eL37 family. Component of the large ribosomal subunit (LSU). Mature yeast ribosomes consist of a small (40S) and a large (60S) subunit. The 40S small subunit contains 1 molecule of ribosomal RNA (18S rRNA) and at least 33 different proteins. The large 60S subunit contains 3 rRNA molecules (25S, 5.8S and 5S rRNA) and at least 46 different proteins. Zn(2+) serves as cofactor.

The protein localises to the cytoplasm. In terms of biological role, component of the ribosome, a large ribonucleoprotein complex responsible for the synthesis of proteins in the cell. The small ribosomal subunit (SSU) binds messenger RNAs (mRNAs) and translates the encoded message by selecting cognate aminoacyl-transfer RNA (tRNA) molecules. The large subunit (LSU) contains the ribosomal catalytic site termed the peptidyl transferase center (PTC), which catalyzes the formation of peptide bonds, thereby polymerizing the amino acids delivered by tRNAs into a polypeptide chain. The nascent polypeptides leave the ribosome through a tunnel in the LSU and interact with protein factors that function in enzymatic processing, targeting, and the membrane insertion of nascent chains at the exit of the ribosomal tunnel. The protein is Large ribosomal subunit protein eL37B (rpl3702) of Schizosaccharomyces pombe (strain 972 / ATCC 24843) (Fission yeast).